The chain runs to 441 residues: Damage-control phosphatase ARMT1 (441 aa).

Ala-2 is modified (N-acetylalanine). Residue Lys-40 is modified to N6-acetyllysine. The residue at position 102 (Ser-102) is a Phosphoserine. 2 residues coordinate Mn(2+): Asp-253 and Asn-254. 253-254 (DN) serves as a coordination point for substrate. The S-adenosyl-L-methionine site is built by Glu-258 and Asp-291. Residue Asp-291 participates in Mn(2+) binding. Substrate is bound by residues 367–371 (DLNYR) and Lys-404. The Subfamily III RTxK motif signature appears at 401–404 (RTLK).

It belongs to the damage-control phosphatase family. Sugar phosphate phosphatase III subfamily. Mn(2+) serves as cofactor. Requires Ni(2+) as cofactor. In terms of processing, automethylated.

The catalysed reaction is beta-D-fructose 1-phosphate + H2O = D-fructose + phosphate. It catalyses the reaction beta-D-fructose 6-phosphate = dihydroxyacetone + D-glyceraldehyde 3-phosphate. The enzyme catalyses L-glutamyl-[protein] + S-adenosyl-L-methionine = [protein]-L-glutamate 5-O-methyl ester + S-adenosyl-L-homocysteine. Functionally, metal-dependent phosphatase that shows phosphatase activity against several substrates, including fructose-1-phosphate and fructose-6-phosphate. Its preference for fructose-1-phosphate, a strong glycating agent that causes DNA damage rather than a canonical yeast metabolite, suggests a damage-control function in hexose phosphate metabolism. Has also been shown to have O-methyltransferase activity that methylates glutamate residues of target proteins to form gamma-glutamyl methyl ester residues. Possibly methylates PCNA, suggesting it is involved in the DNA damage response. This chain is Damage-control phosphatase ARMT1, found in Macaca fascicularis (Crab-eating macaque).